Reading from the N-terminus, the 219-residue chain is RPA-interacting protein (219 aa).

S18 carries the post-translational modification Phosphoserine. A Glycyl lysine isopeptide (Lys-Gly) (interchain with G-Cter in SUMO); in isoform 2 cross-link involves residue K121. An RIP-type zinc finger spans residues 137-212; sequence CPVCTKYNLR…SSLLMSCLAC (76 aa). A mediates nuclear export region spans residues 164-180; it reads SSELTEQKLRACLEGSI.

In terms of assembly, interacts with the RPA1 subunit of RPA complex. Sumoylated. Sumoylation is required for localization in the nuclear PML body and transport of RPA complex in PML body. Upon UV irradiation and during S phase, it is desumoylated, releasing RPA complex that is translocated to sites of DNA damage. Sumoylation takes place at different Lys residues. Variant 'Lys-103' adds a sumoylation site and increases total sumoylation levels. Widely expressed. Expressed in pancreas, kidney, muscle, liver, lung, placenta, brain, heart, leukocytes, colon, intestine, ovary, testis, prostate, thymus and spleen.

It localises to the cytoplasm. It is found in the nucleus. The protein resides in the PML body. Its function is as follows. Mediates the import of RPA complex into the nucleus, possibly via some interaction with importin beta. Isoform 2 is sumoylated and mediates the localization of RPA complex into the PML body of the nucleus, thereby participating in RPA function in DNA metabolism. The sequence is that of RPA-interacting protein (RPAIN) from Homo sapiens (Human).